We begin with the raw amino-acid sequence, 202 residues long: Small ribosomal subunit protein uS5 (202 aa).

Residues 1-13 show a composition bias toward gly residues; it reads MPGQQRRGGGSGG. The tract at residues 1 to 31 is disordered; that stretch reads MPGQQRRGGGSGGSDRRERRDRSGSGPAQEK. A compositionally biased stretch (basic and acidic residues) spans 14-23; that stretch reads SDRRERRDRS. An S5 DRBM domain is found at 34–97; that stretch reads YVERVVAINR…EEAKKHFFKV (64 aa).

Belongs to the universal ribosomal protein uS5 family. Part of the 30S ribosomal subunit. Contacts proteins S4 and S8.

Its function is as follows. With S4 and S12 plays an important role in translational accuracy. Functionally, located at the back of the 30S subunit body where it stabilizes the conformation of the head with respect to the body. This is Small ribosomal subunit protein uS5 from Frankia casuarinae (strain DSM 45818 / CECT 9043 / HFP020203 / CcI3).